We begin with the raw amino-acid sequence, 320 residues long: Olfactory receptor 7C1 (320 aa).

The Extracellular portion of the chain corresponds to 1–25; the sequence is METGNQTHAQEFLLLGFSATSEIQF. Asn5 is a glycosylation site (N-linked (GlcNAc...) asparagine). The helical transmembrane segment at 26-46 threads the bilayer; the sequence is ILFGLFLSMYLVTFTGNLLII. Residues 47-54 are Cytoplasmic-facing; the sequence is LAICSDSH. Residues 55 to 75 traverse the membrane as a helical segment; sequence LHTPMYFFLSNLSFADLCFTS. Residues 76 to 99 are Extracellular-facing; that stretch reads TTVPKMLLNILTQNKFITYAGCLS. A disulfide bond links Cys97 and Cys189. Residues 100-120 traverse the membrane as a helical segment; it reads QIFFFTSFGCLDNLLLTVMAY. Topologically, residues 121–139 are cytoplasmic; sequence DRFVAVCHPLHYTVIMNPQ. A helical transmembrane segment spans residues 140 to 160; it reads LCGLLVLGSWCISVMGSLLET. The Extracellular portion of the chain corresponds to 161–197; sequence LTVLRLSFCTEMEIPHFFCDLLEVLKLACSDTFINNV. A helical membrane pass occupies residues 198–217; the sequence is VIYFATGVLGVISFTGIFFS. Residues 218–237 lie on the Cytoplasmic side of the membrane; sequence YYKIVFSILRISSAGRKHKA. The helical transmembrane segment at 238–258 threads the bilayer; sequence FSTCGSHLSVVTLFYGTGFGV. At 259-271 the chain is on the extracellular side; that stretch reads YLSSAATPSSRTS. A helical transmembrane segment spans residues 272–292; it reads LVASVMYTMVTPMLNPFIYSL. Topologically, residues 293–313 are cytoplasmic; the sequence is RNTDMKRALGRLLSRATFFNG.

The protein belongs to the G-protein coupled receptor 1 family.

It localises to the cell membrane. Odorant receptor. This Homo sapiens (Human) protein is Olfactory receptor 7C1 (OR7C1).